A 193-amino-acid chain; its full sequence is MEPFRIHKGTAAVLMNDNIDTDQIIPKQYLKRIERTGFGKYLFDEWRYDNERHENPNFPLNAPDRKGASILITGDNFGCGSSREHAPWALADYGFRVIIAGGFADIFYMNCMKNGMLPIVMDKEMREKLAKTDAREQIEVNLENEVITTSTHRFHFTIEKMWKEKLLNGLDEISITMQYEQEIKEYERMVAVY.

It belongs to the LeuD family. LeuD type 1 subfamily. In terms of assembly, heterodimer of LeuC and LeuD.

It carries out the reaction (2R,3S)-3-isopropylmalate = (2S)-2-isopropylmalate. It functions in the pathway amino-acid biosynthesis; L-leucine biosynthesis; L-leucine from 3-methyl-2-oxobutanoate: step 2/4. Its function is as follows. Catalyzes the isomerization between 2-isopropylmalate and 3-isopropylmalate, via the formation of 2-isopropylmaleate. The sequence is that of 3-isopropylmalate dehydratase small subunit from Bacillus cereus (strain ATCC 10987 / NRS 248).